Here is a 498-residue protein sequence, read N- to C-terminus: 3-octaprenyl-4-hydroxybenzoate carboxy-lyase (498 aa).

A Mn(2+)-binding site is contributed by Asn-175. Residues 178–180 (IYR), 192–194 (RWL), and 197–198 (RG) contribute to the prenylated FMN site. Position 241 (Glu-241) interacts with Mn(2+). Residue Asp-290 is the Proton donor of the active site.

The protein belongs to the UbiD family. Homohexamer. It depends on prenylated FMN as a cofactor. Mn(2+) is required as a cofactor.

It is found in the cell membrane. The enzyme catalyses a 4-hydroxy-3-(all-trans-polyprenyl)benzoate + H(+) = a 2-(all-trans-polyprenyl)phenol + CO2. It participates in cofactor biosynthesis; ubiquinone biosynthesis. Functionally, catalyzes the decarboxylation of 3-octaprenyl-4-hydroxy benzoate to 2-octaprenylphenol, an intermediate step in ubiquinone biosynthesis. This Pectobacterium atrosepticum (strain SCRI 1043 / ATCC BAA-672) (Erwinia carotovora subsp. atroseptica) protein is 3-octaprenyl-4-hydroxybenzoate carboxy-lyase.